A 483-amino-acid polypeptide reads, in one-letter code: Regulatory protein ViaA (483 aa).

This sequence belongs to the ViaA family. Homodimer. Interacts with RavA.

Its subcellular location is the cytoplasm. Functionally, component of the RavA-ViaA chaperone complex, which may act on the membrane to optimize the function of some of the respiratory chains. ViaA stimulates the ATPase activity of RavA. This is Regulatory protein ViaA from Shigella boydii serotype 18 (strain CDC 3083-94 / BS512).